The sequence spans 411 residues: POU domain, class 4, transcription factor 2 (411 aa).

The segment at 29-95 is disordered; sequence LHSASPGSSA…SEAMRRACLP (67 aa). Residues 31-52 are compositionally biased toward low complexity; the sequence is SASPGSSAPAAPSASSPSSSSN. Composition is skewed to gly residues over residues 53–68 and 76–86; these read AGGG…GGGR and GSGGSGGGGGS. Positions 93–239 are required for transcriptional activation; that stretch reads CLPTPPSNIF…MHQAALSMAH (147 aa). The POU-IV box motif lies at 112-121; sequence RAEALAAVDI. Residues 154 to 168 are compositionally biased toward low complexity; it reads SAASSSSVPISHPSA. Residues 154 to 190 form a disordered region; it reads SAASSSSVPISHPSALAGTHHHHHHHHHHHHQPHQAL. Positions 172–186 are enriched in basic residues; it reads THHHHHHHHHHHHQP. Positions 173 to 187 match the Nuclear speckle targeting signal motif; that stretch reads HHHHHHHHHHHHQPH. Residues 240 to 411 are required for DNA-binding and transcriptional repression; the sequence is AHGLPSHMGC…QKRMKYSAGI (172 aa). The POU-specific domain occupies 252-329; sequence DVDADPRDLE…ILQAWLEEAE (78 aa). A DNA-binding region (homeobox) is located at residues 347–406; sequence KKRKRTSIAAPEKRSLEAYFAIQPRPSSEKIAAIAEKLDLKKNVVRVWFCNQRQKQKRMK.

This sequence belongs to the POU transcription factor family. Class-4 subfamily. In terms of assembly, isoform 2: Interacts with POU4F1 isoform 1; this interaction inhibits both POU4F1 DNA-binding and transcriptional activities. Isoform 2: Interacts (C-terminus) with ESR1 (via DNA-binding domain); this interaction increases the estrogen receptor ESR1 transcriptional activity in a DNA- and ligand 17-beta-estradiol-independent manner. Isoform 2: Interacts (via C-terminus) with TP53 (via N-terminus). Interacts with DLX1 (via homeobox DNA-binding domain); this interaction suppresses DLX1-mediated transcriptional activity in postnatal retina enhancing retinal ganglion cell (RGC) differentiation. Interacts with DLX2 (via homeobox DNA-binding domain); this interaction enhances RGC differentiation. Isoform 1: Interacts (via C-terminus) with ISL1 (via C-terminus). Isoform 1: Interacts with ISL2. Isoform 1: Interacts with LHX2. As to expression, expressed in retinal ganglion cells (RGCs). Expressed in mature osteoclasts. Expressed in cells of layers of the superior colliculus and the adjacent periaqueductal gray (at protein level). Expressed in the brain, peripheral sensory nervous system and retina. Expressed in the optical, intermediate, and deep gray areas of the superior colliculus, the dorsal column of the mesencephalic and pontine central gray, and the lateral interpeduncular nucleus of the brain. Expressed predominantly in postmitotic, terminally differentiated neurons. Expressed in ganglion cell layer (GCL) of the retina.

It is found in the nucleus. It localises to the nucleus speckle. Its subcellular location is the cytoplasm. Functionally, tissue-specific DNA-binding transcription factor involved in the development and differentiation of target cells. Functions either as activator or repressor by modulating the rate of target gene transcription through RNA polymerase II enzyme in a promoter-dependent manner. Binds to the consensus octamer motif 5'-AT[A/T]A[T/A]T[A/T]A-3' of promoter of target genes. Plays a fundamental role in the gene regulatory network essential for retinal ganglion cell (RGC) differentiation. Binds to an octamer site to form a ternary complex with ISL1; cooperates positively with ISL1 and ISL2 to potentiate transcriptional activation of RGC target genes being involved in RGC fate commitment in the developing retina and RGC axon formation and pathfinding. Inhibits DLX1 and DLX2 transcriptional activities preventing DLX1- and DLX2-mediated ability to promote amacrine cell fate specification. In cooperation with TP53 potentiates transcriptional activation of BAX promoter activity increasing neuronal cell apoptosis. Negatively regulates BAX promoter activity in the absence of TP53. Acts as a transcriptional coactivator via its interaction with the transcription factor ESR1 by enhancing its effect on estrogen response element (ERE)-containing promoter. Antagonizes the transcriptional stimulatory activity of POU4F1 by preventing its binding to an octamer motif. Involved in TNFSF11-mediated terminal osteoclast differentiation. The sequence is that of POU domain, class 4, transcription factor 2 from Mus musculus (Mouse).